A 2768-amino-acid polypeptide reads, in one-letter code: Thyroglobulin (2768 aa).

The first 20 residues, 1–20, serve as a signal peptide directing secretion; sequence MMTLVLWVSTLLSSVCLVAA. The residue at position 25 (tyrosine 25) is an Iodotyrosine; alternate. Tyrosine 25 bears the Sulfotyrosine; alternate mark. Tyrosine 25 bears the Thyroxine; alternate mark. Tyrosine 25 carries the triiodothyronine; alternate modification. Thyroglobulin type-1 domains follow at residues 32–93, 94–161, 162–298, and 299–359; these read LRPC…PTAC, LSFC…PTRC, PRSC…RFRC, and PTKC…PLFC. Disulfide bonds link cysteine 35–cysteine 53, cysteine 64–cysteine 71, cysteine 73–cysteine 93, cysteine 97–cysteine 121, cysteine 132–cysteine 139, cysteine 141–cysteine 161, cysteine 165–cysteine 184, and cysteine 195–cysteine 236. Tyrosine 109 carries the iodotyrosine modification. A glycan (N-linked (GlcNAc...) asparagine) is linked at asparagine 111. Iodotyrosine; alternate is present on tyrosine 150. Tyrosine 150 is modified (diiodotyrosine; alternate). Asparagine 199 carries an N-linked (GlcNAc...) asparagine glycan. 2 positions are modified to iodotyrosine: tyrosine 235 and tyrosine 259. Disulfide bonds link cysteine 302/cysteine 320, cysteine 331/cysteine 337, cysteine 339/cysteine 365, cysteine 408/cysteine 608, cysteine 631/cysteine 636, cysteine 638/cysteine 658, cysteine 662/cysteine 687, and cysteine 698/cysteine 703. Asparagine 484, asparagine 496, and asparagine 545 each carry an N-linked (GlcNAc...) asparagine glycan. 6 Thyroglobulin type-1 domains span residues 605-658, 659-726, 727-922, 923-1074, 1075-1146, and 1147-1211; these read AQAC…HPRC, PTKC…PKLC, PSVC…IPAC, PGPC…MPQC, PTSC…SAQC, and PGLC…QPAC. The residue at position 704 (tyrosine 704) is an Iodotyrosine; alternate. Tyrosine 704 carries the thyroxine; alternate modification. Tyrosine 704 bears the Triiodothyronine; alternate mark. A Diiodotyrosine; alternate modification is found at tyrosine 704. Cystine bridges form between cysteine 705/cysteine 726, cysteine 730/cysteine 763, cysteine 774/cysteine 899, cysteine 901/cysteine 922, cysteine 926/cysteine 1032, cysteine 1043/cysteine 1050, cysteine 1052/cysteine 1074, cysteine 1078/cysteine 1109, cysteine 1127/cysteine 1146, cysteine 1150/cysteine 1170, cysteine 1182/cysteine 1189, cysteine 1191/cysteine 1211, cysteine 1216/cysteine 1265, cysteine 1232/cysteine 1246, cysteine 1306/cysteine 1356, and cysteine 1331/cysteine 1347. N-linked (GlcNAc...) asparagine glycosylation is present at asparagine 748. Tyrosine 785 bears the Iodotyrosine mark. Asparagine 817 carries an N-linked (GlcNAc...) asparagine glycan. Iodotyrosine; alternate is present on tyrosine 867. At tyrosine 867 the chain carries Diiodotyrosine; alternate. Diiodotyrosine is present on tyrosine 884. Residue asparagine 948 is glycosylated (N-linked (GlcNAc...) asparagine). Iodotyrosine; alternate is present on tyrosine 993. Tyrosine 993 is modified (diiodotyrosine; alternate). The N-linked (GlcNAc...) asparagine glycan is linked to asparagine 1017. N-linked (GlcNAc...) asparagine glycosylation is present at asparagine 1141. Tyrosine 1310 bears the Iodotyrosine mark. Tyrosine 1310 carries the thyroxine modification. 2 N-linked (GlcNAc...) asparagine glycosylation sites follow: asparagine 1349 and asparagine 1365. 9 disulfides stabilise this stretch: cysteine 1441-cysteine 1458, cysteine 1461-cysteine 1472, cysteine 1475-cysteine 1489, cysteine 1492-cysteine 1509, cysteine 1513-cysteine 1522, cysteine 1542-cysteine 1564, cysteine 1602-cysteine 1626, cysteine 1606-cysteine 1612, and cysteine 1638-cysteine 1661. 3 Type II repeats span residues 1455–1468, 1469–1485, and 1486–1502; these read PLGC…SFSQ, DGKC…GQAG, and SSAC…TITG. One can recognise a Thyroglobulin type-1 11 domain in the interval 1510-1564; the sequence is VTDCQRDEAGLQCDQNGQYQANQKDMDSGEVFCVDSEGQRLQWLQTEAGLSESQC. The Type IIIA repeat unit spans residues 1602-1722; sequence CLADCADDEA…GTNLTDTHLF (121 aa). The N-linked (GlcNAc...) asparagine glycan is linked to asparagine 1715. Disulfide bonds link cysteine 1723–cysteine 1748, cysteine 1727–cysteine 1733, cysteine 1732–cysteine 1834, and cysteine 1759–cysteine 1776. The Type IIIB repeat unit spans residues 1723–1891; it reads CLLACDQDSC…LFSAEQANLW (169 aa). N-linked (GlcNAc...) asparagine glycans are attached at residues asparagine 1773 and asparagine 1866. Cystine bridges form between cysteine 1892–cysteine 1918, cysteine 1896–cysteine 1903, cysteine 1927–cysteine 1938, cysteine 1995–cysteine 2023, cysteine 1999–cysteine 2005, cysteine 2004–cysteine 2075, and cysteine 2034–cysteine 2047. The stretch at 1892–1994 is one Type IIIA repeat; that stretch reads CLSRCAQEPV…EKLISNGFFE (103 aa). N-linked (GlcNAc...) asparagine glycosylation occurs at asparagine 1937. A Type IIIB repeat occupies 1995–2127; sequence CERLCDRDPC…SATRNFSLAQ (133 aa). Asparagine 2012 carries N-linked (GlcNAc...) asparagine glycosylation. A glycan (N-linked (GlcNAc...) asparagine) is linked at asparagine 2122. The Type IIIA repeat unit spans residues 2128 to 2185; it reads DFCLQECSRHQDCLVTTLQIQQGVVRCVFYPDIQSCEHSLRSKTCWLLLHEEAAYIYR. 3 cysteine pairs are disulfide-bonded: cysteine 2130/cysteine 2154, cysteine 2134/cysteine 2140, and cysteine 2163/cysteine 2172. Tyrosine 2184 carries the post-translational modification Iodotyrosine. Residues 2188–2768 form a cholinesterase-like (ChEL) region; sequence GAPLHQSDGI…LEPVPKSYSK (581 aa). A glycan (N-linked (GlcNAc...) asparagine) is linked at asparagine 2251. A disulfide bridge links cysteine 2265 with cysteine 2282. N-linked (GlcNAc...) asparagine glycans are attached at residues asparagine 2296 and asparagine 2445. A disulfide bridge connects residues cysteine 2443 and cysteine 2454. A Thyroxine modification is found at tyrosine 2541. Tyrosine 2574 is modified (iodotyrosine; alternate). Position 2574 is a thyroxine; alternate (tyrosine 2574). Residue tyrosine 2574 is modified to Triiodothyronine; alternate. The residue at position 2574 (tyrosine 2574) is a Diiodotyrosine; alternate. Asparagine 2583 is a glycosylation site (N-linked (GlcNAc...) asparagine). 2 positions are modified to iodotyrosine: tyrosine 2588 and tyrosine 2618. An intrachain disulfide couples cysteine 2592 to cysteine 2716. Residue tyrosine 2698 is modified to Diiodotyrosine. A disordered region spans residues 2731 to 2768; sequence GAKDAQLTKSGEEDLEVGPGSEEDFSGSLEPVPKSYSK. Acidic residues predominate over residues 2743–2755; that stretch reads EDLEVGPGSEEDF. Tyrosine 2766 bears the Iodotyrosine; alternate mark. Thyroxine; alternate is present on tyrosine 2766. Position 2766 is a triiodothyronine; alternate (tyrosine 2766). The residue at position 2766 (tyrosine 2766) is a Diiodotyrosine; alternate.

The protein belongs to the type-B carboxylesterase/lipase family. As to quaternary structure, monomer. Homodimer (via ChEL region); occurs in the endoplasmic reticulum and is required for export to the Golgi apparatus. Homooligomer; disulfide-linked; stored in this form in the thyroid follicle lumen. Iodinated on tyrosine residues by TPO. There are 4 pairs of iodinated tyrosines used for coupling: acceptor Tyr-25 is coupled to donor Tyr-150 or Tyr-235, acceptor Tyr-2574 is coupled to donor Tyr-2541, acceptor Tyr-2766 in monomer 1 is coupled to donor Tyr-2766 in monomer 2 and acceptor Tyr-1310 in monomer 1 is coupled to donor Tyr-109 in monomer 2. Post-translationally, sulfated tyrosines are desulfated during iodination. In terms of processing, undergoes sequential proteolysis by cathepsins to release thyroxine (T4) and triiodothyronine (T3) hormones. In the thyroid follicle lumen, cross-linked TG (storage form) is solubilized by limited proteolysis mediated by cathepsins CTSB and/or CTSL. Partially cleaved TG is further processed by CTSK/cathepsin K and/or CTSL resulting in the release of thyroxine (T4). Following endocytosis, further processing occurs leading to the release of triiodothyronine (T3) and more T4 hormones. As to expression, specifically expressed in the thyroid gland.

The protein localises to the secreted. Functionally, acts as a substrate for the production of iodinated thyroid hormones thyroxine (T4) and triiodothyronine (T3). The synthesis of T3 and T4 involves iodination of selected tyrosine residues of TG/thyroglobulin followed by their oxidative coupling. Following TG re-internalization and lysosomal-mediated proteolysis, T3 and T4 are released from the polypeptide backbone leading to their secretion into the bloodstream. One dimer produces 7 thyroid hormone molecules. This Rattus norvegicus (Rat) protein is Thyroglobulin (Tg).